The primary structure comprises 843 residues: Protein MEI2-like 2 (843 aa).

2 RRM domains span residues 198–271 (RTLF…FSIP) and 283–356 (GTLV…LSRP).

Its function is as follows. Probable RNA-binding protein that plays a role in meiosis and vegetative growth. This Arabidopsis thaliana (Mouse-ear cress) protein is Protein MEI2-like 2 (ML2).